The primary structure comprises 348 residues: Ethanol acetyltransferase 2 (348 aa).

Residues 1–19 (MIFNSLSIKRLSSTXTSLP) constitute a mitochondrion transit peptide. The AB hydrolase-1 domain maps to 49–305 (IIFLHGIYGY…VMKERPQEYI (257 aa)). Active-site charge relay system residues include serine 121, aspartate 145, and histidine 294.

The protein belongs to the AB hydrolase superfamily.

It is found in the mitochondrion. It catalyses the reaction ethanol + acetyl-CoA = ethyl acetate + CoA. It carries out the reaction acetyl-CoA + H2O = acetate + CoA + H(+). The enzyme catalyses ethyl acetate + H2O = ethanol + acetate + H(+). In terms of biological role, alcohol acetyltransferase that catalyzes the synthesis of ethyl acetate from ethanol and acetyl-CoA. Can also function as a thioesterase by hydrolyzing acetyl-CoA in the absence of ethanol, as well as esterase hydrolyzing ethyl acetate. The protein is Ethanol acetyltransferase 2 (EAT2) of Hanseniaspora uvarum (Yeast).